The primary structure comprises 163 residues: Antimicrobial peptide 2 (163 aa).

The N-terminal stretch at 1-22 (MLNMKSFALLMLFATLVGVTIA) is a signal peptide. 2 Chitin-binding type-1 domains span residues 26-66 (NGKC…EIEP) and 69-107 (AGQC…SCLP). 3 cysteine pairs are disulfide-bonded: Cys-29-Cys-42, Cys-36-Cys-48, and Cys-41-Cys-55. Residues 58–67 (NTPLSEIEPT) constitute a propeptide that is removed on maturation. 4 disulfide bridges follow: Cys-72–Cys-83, Cys-77–Cys-89, Cys-82–Cys-96, and Cys-101–Cys-105. A propeptide spanning residues 100 to 163 (MCQGSCLPDM…QVEPAVTKAP (64 aa)) is cleaved from the precursor.

Expressed in roots, flowers, stem and leaves.

Antimicrobial peptide. This chain is Antimicrobial peptide 2, found in Stellaria media (Common chickweed).